The primary structure comprises 410 residues: Multifunctional CCA protein (410 aa).

ATP is bound by residues Gly8 and Arg11. CTP-binding residues include Gly8 and Arg11. Mg(2+) is bound by residues Asp21 and Asp23. Residues Arg91, Arg143, and Arg146 each contribute to the ATP site. CTP is bound by residues Arg91, Arg143, and Arg146. The HD domain maps to 232–333; sequence TGVHVMMVVD…VRLLERSDAI (102 aa).

The protein belongs to the tRNA nucleotidyltransferase/poly(A) polymerase family. Bacterial CCA-adding enzyme type 1 subfamily. Monomer. Can also form homodimers and oligomers. Requires Mg(2+) as cofactor. The cofactor is Ni(2+).

The catalysed reaction is a tRNA precursor + 2 CTP + ATP = a tRNA with a 3' CCA end + 3 diphosphate. The enzyme catalyses a tRNA with a 3' CCA end + 2 CTP + ATP = a tRNA with a 3' CCACCA end + 3 diphosphate. Catalyzes the addition and repair of the essential 3'-terminal CCA sequence in tRNAs without using a nucleic acid template. Adds these three nucleotides in the order of C, C, and A to the tRNA nucleotide-73, using CTP and ATP as substrates and producing inorganic pyrophosphate. tRNA 3'-terminal CCA addition is required both for tRNA processing and repair. Also involved in tRNA surveillance by mediating tandem CCA addition to generate a CCACCA at the 3' terminus of unstable tRNAs. While stable tRNAs receive only 3'-terminal CCA, unstable tRNAs are marked with CCACCA and rapidly degraded. This Paraburkholderia phytofirmans (strain DSM 17436 / LMG 22146 / PsJN) (Burkholderia phytofirmans) protein is Multifunctional CCA protein.